The following is a 205-amino-acid chain: Urease accessory protein UreE (205 aa).

A compositionally biased stretch (basic residues) spans 178-196 (AHFHAGGHGHVHSGHGHGG). The tract at residues 178 to 205 (AHFHAGGHGHVHSGHGHGGKHGEHDAES) is disordered.

The protein belongs to the UreE family.

It is found in the cytoplasm. In terms of biological role, involved in urease metallocenter assembly. Binds nickel. Probably functions as a nickel donor during metallocenter assembly. In Bordetella pertussis (strain Tohama I / ATCC BAA-589 / NCTC 13251), this protein is Urease accessory protein UreE.